Reading from the N-terminus, the 316-residue chain is MTGTQALRHHDNFLQVAKSYYQLTKPRIIPLLLITTAAAMEIASKGQVSPLLLFLTLLGGTLAAAAAQTLNCIYDRDIDHTMLRTRARPIPSGRVQPLHALIFALVLASLSLALFVFFVNTLSGFLAMTGIAFYMLIYTHLLKRHSIQNIVIGGAAGSIPPLVGWAAVTGDLGWIPWILFAIIFLWTPPHFWALALMIKDDYAEVDIPMMPVVKGEEATSEQIWLYTLIVVPFTFLLIYPLAACGVVYGVAALVLGFVFLKKAWRLKQNPFDRDIARSLFKYSILYMMLLCTAMVIDSLPMTSHLIATIASLFSCS.

Helical transmembrane passes span 28–48 (IIPL…KGQV), 50–70 (PLLL…AQTL), 99–119 (HALI…VFFV), 122–142 (LSGF…THLL), 150–170 (IVIG…AVTG), 178–198 (ILFA…ALMI), 223–243 (IWLY…PLAA), 244–264 (CGVV…KKAW), and 293–313 (AMVI…ASLF).

The protein belongs to the UbiA prenyltransferase family. Protoheme IX farnesyltransferase subfamily.

The protein resides in the cell inner membrane. It carries out the reaction heme b + (2E,6E)-farnesyl diphosphate + H2O = Fe(II)-heme o + diphosphate. Its pathway is porphyrin-containing compound metabolism; heme O biosynthesis; heme O from protoheme: step 1/1. Functionally, converts heme B (protoheme IX) to heme O by substitution of the vinyl group on carbon 2 of heme B porphyrin ring with a hydroxyethyl farnesyl side group. This chain is Protoheme IX farnesyltransferase, found in Microcystis aeruginosa (strain NIES-843 / IAM M-2473).